A 504-amino-acid chain; its full sequence is MSEIVTYEDALKDFEPIIGLEVHVELSTQTKLFSSAPNIAGPLASCASQGPNTLVTPVCLGLPGSLPTVNERAVDYGIALGLALGCSIADELIFARKNYFYPDLPKNYQISQFDSPLAYDGKLEVETESGDVFFVEIERAHLEEDAGKLAHKSSTGRIQGAQYSLIDYNRSGVPLVEIVSRPVFADRCAPQVARAFVELIREIVLSLGVSNARLERGNIRCDANVSLRPRGLGAGILPNRTETKNLNSLRSIERAIRYEIQRQATLISSGELVRQETRHWREDRGITLSGRVKADSHEYRYFPEPDLLPIPIPSDKVEAIRLSMPEHPLALRRRLKAEWKFSDLQFRDVLNSSVLKQVDETVRAGATPDGAKKWWTGEITRIASQRRCNASDLISPEAVAEIELLISKGILNDSLARKVLAAVIDESLSVQQAIEKYDLSLTESASVERVLEKVLSENQEVVQKVISGKTQAVGVLVGSCMKTLGGKADASKLRQTILNRLLPR.

This sequence belongs to the GatB/GatE family. GatB subfamily. As to quaternary structure, heterotrimer of A, B and C subunits.

It carries out the reaction L-glutamyl-tRNA(Gln) + L-glutamine + ATP + H2O = L-glutaminyl-tRNA(Gln) + L-glutamate + ADP + phosphate + H(+). It catalyses the reaction L-aspartyl-tRNA(Asn) + L-glutamine + ATP + H2O = L-asparaginyl-tRNA(Asn) + L-glutamate + ADP + phosphate + 2 H(+). Allows the formation of correctly charged Asn-tRNA(Asn) or Gln-tRNA(Gln) through the transamidation of misacylated Asp-tRNA(Asn) or Glu-tRNA(Gln) in organisms which lack either or both of asparaginyl-tRNA or glutaminyl-tRNA synthetases. The reaction takes place in the presence of glutamine and ATP through an activated phospho-Asp-tRNA(Asn) or phospho-Glu-tRNA(Gln). This Tropheryma whipplei (strain TW08/27) (Whipple's bacillus) protein is Aspartyl/glutamyl-tRNA(Asn/Gln) amidotransferase subunit B.